The following is a 741-amino-acid chain: Zinc transporter ZIP6 (741 aa).

The N-terminal stretch at M1–P20 is a signal peptide. Over L21 to W311 the chain is Extracellular. A glycan (N-linked (GlcNAc...) asparagine) is linked at N68. A compositionally biased stretch (basic and acidic residues) spans H95–R111. Disordered stretches follow at residues H95–S172 and E189–R213. Over residues D135–K147 the composition is skewed to polar residues. N-linked (GlcNAc...) asparagine glycosylation is present at N142. Over residues R150–K162 the composition is skewed to basic and acidic residues. Residues E163–S172 are compositionally biased toward low complexity. A compositionally biased stretch (polar residues) spans I200 to T209. N226, N251, and N268 each carry an N-linked (GlcNAc...) asparagine glycan. The chain crosses the membrane as a helical span at residues L312–V332. The Cytoplasmic segment spans residues P333–K341. A helical membrane pass occupies residues F342 to H362. Residues L363 to K409 lie on the Extracellular side of the membrane. A helical membrane pass occupies residues G410–I430. At K431 to A643 the chain is on the cytoplasmic side. Positions K434–Q494 are disordered. Positions V450–R475 form a coiled coil. S457 and S464 each carry phosphoserine. Residues N466 to E477 show a composition bias toward basic and acidic residues. Residues Q481–Q494 are compositionally biased toward polar residues. A helical transmembrane segment spans residues V644 to I664. Residues G665–S672 are Extracellular-facing. N-linked (GlcNAc...) asparagine glycosylation occurs at N670. A helical transmembrane segment spans residues M673–P693. Over E694–Y710 the chain is Cytoplasmic. The helical transmembrane segment at F711–F731 threads the bilayer. The Extracellular portion of the chain corresponds to E732–F741.

Belongs to the ZIP transporter (TC 2.A.5) family. As to quaternary structure, interacts with SLC39A10; which triggers cells to undergo EMT and mitosis. Found in a complex with SLC39A6, SLC39A10 and with the 'Ser-727' phosphorylated form of STAT3 throughout mitosis. Found in a complex with SLC39A6, SLC39A10 and with NCAM1; this complex controls NCAM1 phosphorylation and integration into focal adhesion complexes during epithelial-to-mesenchymal transition (EMT). Found in a complex with SLC39A6, SLC39A10 and with GSK3B that controls NCAM1 phosphorylation. In terms of processing, cleaved on the N-terminus before locating to the plasma membrane. N-glycosylated. Post-translationally, phosphorylated by ZAP70 in response to TCR stimulation leading to its activation. As to expression, expressed in the endothelial cells of the brain capillaries.

It is found in the cell membrane. The protein localises to the cell projection. It localises to the lamellipodium membrane. The protein resides in the membrane raft. Its subcellular location is the apical cell membrane. It catalyses the reaction Zn(2+)(in) = Zn(2+)(out). Zinc-influx transporter which plays a role in zinc homeostasis and in the induction of epithelial-to-mesenchymal transition (EMT). When associated with SLC39A10, the heterodimer formed by SLC39A10 and SLC39A6 mediates cellular zinc uptake to trigger cells to undergo epithelial- to-mesenchymal transition (EMT). The SLC39A10-SLC39A6 heterodimer also controls NCAM1 phosphorylation and its integration into focal adhesion complexes during EMT. Zinc influx inactivates GSK3B, enabling unphosphorylated SNAI1 in the nucleus to down-regulate adherence genes such as CDH1, causing loss of cell adherence. In addition, the SLC39A10-SLC39A6 heterodimer plays an essentiel role in initiating mitosis by importing zinc into cells to initiate a pathway resulting in the onset of mitosis. Participates in the T-cell receptor signaling regulation by mediating cellular zinc uptake into activated lymphocytes. Regulates the zinc influx necessary for proper meiotic progression to metaphase II (MII) that allows the oocyte-to-egg transition. This is Zinc transporter ZIP6 from Rattus norvegicus (Rat).